Consider the following 255-residue polypeptide: Ribosomal RNA small subunit methyltransferase J (255 aa).

Residues 107–108 (RD), 123–124 (ER), and D178 each bind S-adenosyl-L-methionine. The tract at residues 228-247 (ARAEPLSGRKPSHQIPGKTT) is disordered.

It belongs to the methyltransferase superfamily. RsmJ family.

Its subcellular location is the cytoplasm. The enzyme catalyses guanosine(1516) in 16S rRNA + S-adenosyl-L-methionine = N(2)-methylguanosine(1516) in 16S rRNA + S-adenosyl-L-homocysteine + H(+). Its function is as follows. Specifically methylates the guanosine in position 1516 of 16S rRNA. This chain is Ribosomal RNA small subunit methyltransferase J, found in Thioalkalivibrio sulfidiphilus (strain HL-EbGR7).